Consider the following 263-residue polypeptide: Isoprenyl transferase (263 aa).

The active site involves Asp38. Asp38 is a Mg(2+) binding site. Substrate contacts are provided by residues 39–42 (GNRR), His55, and 83–85 (STD). Asn86 (proton acceptor) is an active-site residue. Residues Phe87, Arg89, Arg212, and 218–220 (RLS) contribute to the substrate site. Residue Glu231 participates in Mg(2+) binding.

The protein belongs to the UPP synthase family. As to quaternary structure, homodimer. Mg(2+) is required as a cofactor.

Its function is as follows. Catalyzes the condensation of isopentenyl diphosphate (IPP) with allylic pyrophosphates generating different type of terpenoids. The sequence is that of Isoprenyl transferase from Thermus thermophilus (strain ATCC BAA-163 / DSM 7039 / HB27).